The primary structure comprises 70 residues: UPF0519 protein D (70 aa).

The protein belongs to the UPF0519 family.

This is UPF0519 protein D from Dictyostelium discoideum (Social amoeba).